We begin with the raw amino-acid sequence, 93 residues long: UPF0728 protein C10orf53 homolog (93 aa).

Belongs to the UPF0728 family.

The chain is UPF0728 protein C10orf53 homolog from Mus musculus (Mouse).